The primary structure comprises 448 residues: Probable glycine dehydrogenase (decarboxylating) subunit 1 (448 aa).

This sequence belongs to the GcvP family. N-terminal subunit subfamily. In terms of assembly, the glycine cleavage system is composed of four proteins: P, T, L and H. In this organism, the P 'protein' is a heterodimer of two subunits.

It carries out the reaction N(6)-[(R)-lipoyl]-L-lysyl-[glycine-cleavage complex H protein] + glycine + H(+) = N(6)-[(R)-S(8)-aminomethyldihydrolipoyl]-L-lysyl-[glycine-cleavage complex H protein] + CO2. Its function is as follows. The glycine cleavage system catalyzes the degradation of glycine. The P protein binds the alpha-amino group of glycine through its pyridoxal phosphate cofactor; CO(2) is released and the remaining methylamine moiety is then transferred to the lipoamide cofactor of the H protein. This Bacillus licheniformis (strain ATCC 14580 / DSM 13 / JCM 2505 / CCUG 7422 / NBRC 12200 / NCIMB 9375 / NCTC 10341 / NRRL NRS-1264 / Gibson 46) protein is Probable glycine dehydrogenase (decarboxylating) subunit 1.